The primary structure comprises 356 residues: Homoserine O-succinyltransferase (356 aa).

Catalysis depends on cysteine 146, which acts as the Acyl-thioester intermediate. Substrate contacts are provided by lysine 167 and serine 196. Histidine 239 (proton acceptor) is an active-site residue. Glutamate 241 is an active-site residue. Arginine 253 lines the substrate pocket.

It belongs to the MetA family.

The protein localises to the cytoplasm. It carries out the reaction L-homoserine + succinyl-CoA = O-succinyl-L-homoserine + CoA. The protein operates within amino-acid biosynthesis; L-methionine biosynthesis via de novo pathway; O-succinyl-L-homoserine from L-homoserine: step 1/1. Its function is as follows. Transfers a succinyl group from succinyl-CoA to L-homoserine, forming succinyl-L-homoserine. The polypeptide is Homoserine O-succinyltransferase (Thioalkalivibrio nitratireducens (strain DSM 14787 / UNIQEM 213 / ALEN2)).